A 143-amino-acid chain; its full sequence is Ribonuclease H (143 aa).

Residues 1–136 (MQEIEIFCDG…CDSLAKLEAQ (136 aa)) form the RNase H type-1 domain. Residues D9, E47, D69, and D128 each contribute to the Mg(2+) site.

The protein belongs to the RNase H family. In terms of assembly, monomer. Mg(2+) is required as a cofactor.

The protein resides in the cytoplasm. The catalysed reaction is Endonucleolytic cleavage to 5'-phosphomonoester.. In terms of biological role, endonuclease that specifically degrades the RNA of RNA-DNA hybrids. This chain is Ribonuclease H, found in Helicobacter pylori (strain HPAG1).